A 940-amino-acid polypeptide reads, in one-letter code: Isoleucine--tRNA ligase (940 aa).

The 'HIGH' region signature appears at 58 to 68 (PYANGSIHIGH). Position 564 (Glu-564) interacts with L-isoleucyl-5'-AMP. Positions 605–609 (KMSKS) match the 'KMSKS' region motif. Position 608 (Lys-608) interacts with ATP. 4 residues coordinate Zn(2+): Cys-903, Cys-906, Cys-923, and Cys-926.

The protein belongs to the class-I aminoacyl-tRNA synthetase family. IleS type 1 subfamily. In terms of assembly, monomer. Zn(2+) serves as cofactor.

The protein localises to the cytoplasm. The catalysed reaction is tRNA(Ile) + L-isoleucine + ATP = L-isoleucyl-tRNA(Ile) + AMP + diphosphate. Catalyzes the attachment of isoleucine to tRNA(Ile). As IleRS can inadvertently accommodate and process structurally similar amino acids such as valine, to avoid such errors it has two additional distinct tRNA(Ile)-dependent editing activities. One activity is designated as 'pretransfer' editing and involves the hydrolysis of activated Val-AMP. The other activity is designated 'posttransfer' editing and involves deacylation of mischarged Val-tRNA(Ile). The polypeptide is Isoleucine--tRNA ligase (Shewanella sp. (strain MR-7)).